A 311-amino-acid polypeptide reads, in one-letter code: Malate dehydrogenase (311 aa).

Residues 7–12 (GAGNVG) and Asp32 each bind NAD(+). Substrate contacts are provided by Arg82 and Arg88. Residues Asn95 and 118–120 (VSN) each bind NAD(+). Positions 120 and 151 each coordinate substrate. His175 functions as the Proton acceptor in the catalytic mechanism.

Belongs to the LDH/MDH superfamily. MDH type 3 family.

The enzyme catalyses (S)-malate + NAD(+) = oxaloacetate + NADH + H(+). In terms of biological role, catalyzes the reversible oxidation of malate to oxaloacetate. In Flavobacterium johnsoniae (strain ATCC 17061 / DSM 2064 / JCM 8514 / BCRC 14874 / CCUG 350202 / NBRC 14942 / NCIMB 11054 / UW101) (Cytophaga johnsonae), this protein is Malate dehydrogenase.